The following is a 395-amino-acid chain: GTPase Obg (395 aa).

The Obg domain occupies 1–159; it reads MQFVDEASII…RNLRFEMKVM (159 aa). A disordered region spans residues 128–147; the sequence is IHFKSSTNRAPRKTTPGTEG. Positions 160-333 constitute an OBG-type G domain; the sequence is ADVGLLGVPN…LVQAAHRWLT (174 aa). Residues 166–173, 191–195, 213–216, 283–286, and 314–316 each bind GTP; these read GVPNAGKS, FTTLV, DVPG, NKLD, and SAI. Positions 173 and 193 each coordinate Mg(2+). Over residues 340–368 the composition is skewed to basic and acidic residues; that stretch reads AEDETAFEHEREMRRRMEDEAVARAEARM. The disordered stretch occupies residues 340-395; that stretch reads AEDETAFEHEREMRRRMEDEAVARAEARMSRKRKPAEDDDDDFDEDDYDVEVEYAP. Over residues 376–395 the composition is skewed to acidic residues; sequence EDDDDDFDEDDYDVEVEYAP.

It belongs to the TRAFAC class OBG-HflX-like GTPase superfamily. OBG GTPase family. As to quaternary structure, monomer. Mg(2+) serves as cofactor.

The protein localises to the cytoplasm. An essential GTPase which binds GTP, GDP and possibly (p)ppGpp with moderate affinity, with high nucleotide exchange rates and a fairly low GTP hydrolysis rate. Plays a role in control of the cell cycle, stress response, ribosome biogenesis and in those bacteria that undergo differentiation, in morphogenesis control. The protein is GTPase Obg of Chromohalobacter salexigens (strain ATCC BAA-138 / DSM 3043 / CIP 106854 / NCIMB 13768 / 1H11).